Consider the following 308-residue polypeptide: tRNA pseudouridine synthase B (308 aa).

Catalysis depends on Asp45, which acts as the Nucleophile.

It belongs to the pseudouridine synthase TruB family. Type 1 subfamily.

The catalysed reaction is uridine(55) in tRNA = pseudouridine(55) in tRNA. Functionally, responsible for synthesis of pseudouridine from uracil-55 in the psi GC loop of transfer RNAs. This is tRNA pseudouridine synthase B from Gloeothece citriformis (strain PCC 7424) (Cyanothece sp. (strain PCC 7424)).